The chain runs to 48 residues: Sperm protamine R3 isoform 2 (48 aa).

Positions 1-29 are enriched in basic residues; the sequence is ARRRHSMKKKRKSVRRRKTRKNQRKRKNS. The tract at residues 1–48 is disordered; sequence ARRRHSMKKKRKSVRRRKTRKNQRKRKNSLGRSFKAHGFLKQPPRFRP.

In terms of tissue distribution, testis.

It localises to the nucleus. The protein localises to the chromosome. Functionally, protamines substitute for histones in the chromatin of sperm during the haploid phase of spermatogenesis. They compact sperm DNA into a highly condensed, stable and inactive complex. In Hydrolagus colliei (Spotted ratfish), this protein is Sperm protamine R3 isoform 2.